Reading from the N-terminus, the 157-residue chain is Transcription elongation factor GreB (157 aa).

Belongs to the GreA/GreB family. GreB subfamily.

In terms of biological role, necessary for efficient RNA polymerase transcription elongation past template-encoded arresting sites. The arresting sites in DNA have the property of trapping a certain fraction of elongating RNA polymerases that pass through, resulting in locked ternary complexes. Cleavage of the nascent transcript by cleavage factors such as GreA or GreB allows the resumption of elongation from the new 3'terminus. GreB releases sequences of up to 9 nucleotides in length. In Salmonella typhimurium (strain LT2 / SGSC1412 / ATCC 700720), this protein is Transcription elongation factor GreB.